The sequence spans 251 residues: Small ribosomal subunit protein uS4c (251 aa).

S4 RNA-binding domains lie at 110 to 170 (MRLD…KLVN) and 189 to 251 (RTLA…QFSE).

It belongs to the universal ribosomal protein uS4 family. As to quaternary structure, part of the 30S ribosomal subunit. Contacts protein S5. The interaction surface between S4 and S5 is involved in control of translational fidelity.

It localises to the plastid. Its subcellular location is the chloroplast. In terms of biological role, one of the primary rRNA binding proteins, it binds directly to 16S rRNA where it nucleates assembly of the body of the 30S subunit. With S5 and S12 plays an important role in translational accuracy. In Tetradesmus obliquus (Green alga), this protein is Small ribosomal subunit protein uS4c (rps4).